The primary structure comprises 125 residues: uncharacterized protein (125 aa).

2 consecutive transmembrane segments (helical) span residues 28–48 and 54–74; these read VFIT…SQFC and FFLP…LFFF.

It is found in the membrane. This is an uncharacterized protein from Saccharomyces cerevisiae (strain ATCC 204508 / S288c) (Baker's yeast).